The sequence spans 77 residues: DNA-directed RNA polymerase subunit epsilon (77 aa).

The protein belongs to the RNA polymerase subunit epsilon family. As to quaternary structure, RNAP is composed of a core of 2 alpha, a beta and a beta' subunit. The core is associated with a delta subunit, and at least one of epsilon or omega. When a sigma factor is associated with the core the holoenzyme is formed, which can initiate transcription.

It carries out the reaction RNA(n) + a ribonucleoside 5'-triphosphate = RNA(n+1) + diphosphate. In terms of biological role, a non-essential component of RNA polymerase (RNAP). The polypeptide is DNA-directed RNA polymerase subunit epsilon (Streptococcus pneumoniae (strain Hungary19A-6)).